The following is a 32-amino-acid chain: Alpha-amylase inhibitor AAI (32 aa).

Cystine bridges form between C1–C18, C8–C23, and C17–C31.

Endosperm.

Its function is as follows. Alpha-amylase inhibitor. It is active against alpha-amylases from Tribolium castaneum and Prostephanus truncatus larvae. In Amaranthus hypochondriacus (Prince-of-Wales feather), this protein is Alpha-amylase inhibitor AAI (AAI).